The following is a 212-amino-acid chain: Ribosomal RNA small subunit methyltransferase G (212 aa).

Residues F78, 96-98, 124-125, and R141 contribute to the S-adenosyl-L-methionine site; these read ESS and VE.

The protein belongs to the methyltransferase superfamily. RNA methyltransferase RsmG family.

It localises to the cytoplasm. Functionally, specifically methylates the N7 position of a guanine in 16S rRNA. The chain is Ribosomal RNA small subunit methyltransferase G from Onion yellows phytoplasma (strain OY-M).